Consider the following 326-residue polypeptide: Olfactory receptor 10X1 (326 aa).

The Extracellular portion of the chain corresponds to methionine 1 to threonine 41. N-linked (GlcNAc...) asparagine glycosylation is present at asparagine 21. Residues phenylalanine 42–methionine 62 traverse the membrane as a helical segment. At glycine 63–serine 70 the chain is on the cytoplasmic side. Residues leucine 71–leucine 91 form a helical membrane-spanning segment. Residues threonine 92 to leucine 115 lie on the Extracellular side of the membrane. A disulfide bridge connects residues cysteine 113 and cysteine 205. The chain crosses the membrane as a helical span at residues glutamine 116–tyrosine 136. Residues aspartate 137–isoleucine 155 are Cytoplasmic-facing. Residues valine 156–threonine 176 form a helical membrane-spanning segment. Residues alanine 177–phenylalanine 213 are Extracellular-facing. N-linked (GlcNAc...) asparagine glycosylation occurs at asparagine 209. A helical transmembrane segment spans residues isoleucine 214 to threonine 233. Residues aspartate 234 to alanine 253 are Cytoplasmic-facing. A helical membrane pass occupies residues phenylalanine 254 to valine 274. Over tyrosine 275–aspartate 284 the chain is Extracellular. The chain crosses the membrane as a helical span at residues threonine 285–leucine 305. Topologically, residues arginine 306–lysine 326 are cytoplasmic.

Belongs to the G-protein coupled receptor 1 family.

The protein localises to the cell membrane. Functionally, odorant receptor. The polypeptide is Olfactory receptor 10X1 (OR10X1) (Homo sapiens (Human)).